The primary structure comprises 310 residues: Probable cell division protein WhiA (310 aa).

A DNA-binding region (H-T-H motif) is located at residues 277-310; that stretch reads SLKELAEQVPDGPISKSGVNHRLKKLHEIAENLR.

It belongs to the WhiA family.

Functionally, involved in cell division and chromosome segregation. The chain is Probable cell division protein WhiA from Lactobacillus delbrueckii subsp. bulgaricus (strain ATCC 11842 / DSM 20081 / BCRC 10696 / JCM 1002 / NBRC 13953 / NCIMB 11778 / NCTC 12712 / WDCM 00102 / Lb 14).